Reading from the N-terminus, the 80-residue chain is Conotoxin Vi6.2 (80 aa).

Positions 1–22 (MKLTCVLITTVLFLTASQLITA) are cleaved as a signal peptide. A propeptide spanning residues 23–47 (DYSRDKRQYRAVRLRDEMRNFKGAR) is cleaved from the precursor. Disulfide bonds link cysteine 49–cysteine 62, cysteine 56–cysteine 67, and cysteine 61–cysteine 77. 2 positions are modified to 4-hydroxyproline: proline 60 and proline 63.

The protein belongs to the conotoxin O1 superfamily. As to expression, expressed by the venom duct.

It is found in the secreted. Its function is as follows. Ion channel inhibitor that inhibits the increase in intracellular calcium upon depolarization in DRG neurons. In vivo, both intraperitoneal and intracranial injections into mice induce hyperactivity. The polypeptide is Conotoxin Vi6.2 (Conus virgo (Virgin cone)).